The chain runs to 278 residues: HAUS augmin-like complex subunit 1 (278 aa).

Coiled coils occupy residues 49-79 (RDVY…LMES), 124-177 (SDLF…KVDN), and 249-277 (SLAQ…DMME).

Belongs to the HAUS1 family. In terms of assembly, component of the HAUS augmin-like complex. The complex interacts with the gamma-tubulin ring complex and this interaction is required for spindle assembly. Associates with microtubules. The interaction with microtubules is strong during mitosis, while it is weak or absent during interphase. It is unclear whether this interaction is direct or indirect. Interacts with EML3 (phosphorylated at 'Thr-881'). Widely expressed. Expressed in pancreas, kidney, skeletal muscle, liver and heart. Weakly expressed in lung, brain and placenta.

The protein localises to the cytoplasm. The protein resides in the cytoskeleton. It localises to the microtubule organizing center. It is found in the centrosome. Its subcellular location is the spindle. The protein localises to the spindle pole. Functionally, contributes to mitotic spindle assembly, maintenance of centrosome integrity and completion of cytokinesis as part of the HAUS augmin-like complex. The sequence is that of HAUS augmin-like complex subunit 1 (HAUS1) from Homo sapiens (Human).